Reading from the N-terminus, the 131-residue chain is Small ribosomal subunit protein uS19 (131 aa).

Belongs to the universal ribosomal protein uS19 family.

Functionally, protein S19 forms a complex with S13 that binds strongly to the 16S ribosomal RNA. In Cenarchaeum symbiosum (strain A), this protein is Small ribosomal subunit protein uS19.